A 100-amino-acid chain; its full sequence is uncharacterized protein (100 aa).

Residues 1–17 (MTMKYFCSVMIAIALVG) form the signal peptide. The N-palmitoyl cysteine moiety is linked to residue Cys-18. A lipid anchor (S-diacylglycerol cysteine) is attached at Cys-18.

The protein resides in the cell membrane. This is an uncharacterized protein from Salmonella paratyphi A (strain ATCC 9150 / SARB42).